We begin with the raw amino-acid sequence, 591 residues long: Asparagine synthetase [glutamine-hydrolyzing] 2 (591 aa).

The active-site For GATase activity is the Cys2. The 184-residue stretch at Cys2–Gly185 folds into the Glutamine amidotransferase type-2 domain. L-glutamine is bound by residues Arg50–Val54, Asn75–Glu77, and Asp98. Residues Pro193–Pro516 form the Asparagine synthetase domain. ATP is bound by residues Leu231, Ile267, and Ser341–Gly342.

As to expression, expressed in companion cells of leaf sheath vascular bundles, and phloem-parenchyma cells, nucellar projections and nucellar epidermis of dorsal vascular bundles of grains.

It catalyses the reaction L-aspartate + L-glutamine + ATP + H2O = L-asparagine + L-glutamate + AMP + diphosphate + H(+). The protein operates within amino-acid biosynthesis; L-asparagine biosynthesis; L-asparagine from L-aspartate (L-Gln route): step 1/1. Functionally, essential for nitrogen assimilation, distribution and remobilization within the plant via the phloem. The protein is Asparagine synthetase [glutamine-hydrolyzing] 2 of Oryza sativa subsp. japonica (Rice).